The sequence spans 455 residues: Bifunctional protein GlmU (455 aa).

A pyrophosphorylase region spans residues 1 to 227 (MGLSVIILAA…CEEVQGVNDR (227 aa)). UDP-N-acetyl-alpha-D-glucosamine-binding positions include 8-11 (LAAG), K22, Q73, 78-79 (GT), 100-102 (YGD), G137, E152, N167, and N225. Residue D102 participates in Mg(2+) binding. Position 225 (N225) interacts with Mg(2+). A linker region spans residues 228–248 (WELTKLERYYQRLMAKKLSLA). Residues 249-455 (GVTIIDPERF…KGWHRPTKKE (207 aa)) form an N-acetyltransferase region. Residues R332 and K350 each contribute to the UDP-N-acetyl-alpha-D-glucosamine site. The Proton acceptor role is filled by H362. Residues Y365 and N376 each contribute to the UDP-N-acetyl-alpha-D-glucosamine site. Residues A379, 385–386 (NY), S404, A422, and R439 contribute to the acetyl-CoA site.

It in the N-terminal section; belongs to the N-acetylglucosamine-1-phosphate uridyltransferase family. This sequence in the C-terminal section; belongs to the transferase hexapeptide repeat family. In terms of assembly, homotrimer. The cofactor is Mg(2+).

The protein resides in the cytoplasm. The catalysed reaction is alpha-D-glucosamine 1-phosphate + acetyl-CoA = N-acetyl-alpha-D-glucosamine 1-phosphate + CoA + H(+). It carries out the reaction N-acetyl-alpha-D-glucosamine 1-phosphate + UTP + H(+) = UDP-N-acetyl-alpha-D-glucosamine + diphosphate. It functions in the pathway nucleotide-sugar biosynthesis; UDP-N-acetyl-alpha-D-glucosamine biosynthesis; N-acetyl-alpha-D-glucosamine 1-phosphate from alpha-D-glucosamine 6-phosphate (route II): step 2/2. It participates in nucleotide-sugar biosynthesis; UDP-N-acetyl-alpha-D-glucosamine biosynthesis; UDP-N-acetyl-alpha-D-glucosamine from N-acetyl-alpha-D-glucosamine 1-phosphate: step 1/1. Its pathway is bacterial outer membrane biogenesis; LPS lipid A biosynthesis. Catalyzes the last two sequential reactions in the de novo biosynthetic pathway for UDP-N-acetylglucosamine (UDP-GlcNAc). The C-terminal domain catalyzes the transfer of acetyl group from acetyl coenzyme A to glucosamine-1-phosphate (GlcN-1-P) to produce N-acetylglucosamine-1-phosphate (GlcNAc-1-P), which is converted into UDP-GlcNAc by the transfer of uridine 5-monophosphate (from uridine 5-triphosphate), a reaction catalyzed by the N-terminal domain. This is Bifunctional protein GlmU from Coxiella burnetii (strain Dugway 5J108-111).